A 202-amino-acid chain; its full sequence is Dephospho-CoA kinase (202 aa).

The DPCK domain occupies 3-201 (AIGLTGGIGS…QRYLGFAAAA (199 aa)). 11-16 (GSGKTT) is an ATP binding site.

This sequence belongs to the CoaE family.

The protein localises to the cytoplasm. The catalysed reaction is 3'-dephospho-CoA + ATP = ADP + CoA + H(+). It functions in the pathway cofactor biosynthesis; coenzyme A biosynthesis; CoA from (R)-pantothenate: step 5/5. Its function is as follows. Catalyzes the phosphorylation of the 3'-hydroxyl group of dephosphocoenzyme A to form coenzyme A. The protein is Dephospho-CoA kinase of Burkholderia lata (strain ATCC 17760 / DSM 23089 / LMG 22485 / NCIMB 9086 / R18194 / 383).